A 198-amino-acid chain; its full sequence is Probable GTP-binding protein EngB (198 aa).

The EngB-type G domain occupies 36-198 (SEPQFAFIGR…NLSKLQELLE (163 aa)). Residues 44–51 (GRSNVGKS), 70–74 (GRTQL), 88–91 (DLPG), 155–158 (NKID), and 182–184 (ISA) contribute to the GTP site. Mg(2+)-binding residues include S51 and T72.

It belongs to the TRAFAC class TrmE-Era-EngA-EngB-Septin-like GTPase superfamily. EngB GTPase family. Mg(2+) is required as a cofactor.

Necessary for normal cell division and for the maintenance of normal septation. This Mesomycoplasma hyopneumoniae (strain 232) (Mycoplasma hyopneumoniae) protein is Probable GTP-binding protein EngB.